We begin with the raw amino-acid sequence, 68 residues long: MKLNEVKEFVKELRGLSQEELAKRENELKKELFELRFQAAAGQLEQTARLKEVKKQIARIKTVQSEVK.

It belongs to the universal ribosomal protein uL29 family.

In Streptococcus gordonii (strain Challis / ATCC 35105 / BCRC 15272 / CH1 / DL1 / V288), this protein is Large ribosomal subunit protein uL29.